A 558-amino-acid polypeptide reads, in one-letter code: Delta-1-pyrroline-5-carboxylate dehydrogenase, mitochondrial (558 aa).

NAD(+)-binding positions include Ser-198, Lys-223, and 276-280 (GSTGV). Glu-306 acts as the Proton acceptor in catalysis. Cys-340 functions as the Nucleophile in the catalytic mechanism. Glu-438 lines the NAD(+) pocket.

It belongs to the aldehyde dehydrogenase family.

It localises to the mitochondrion matrix. It catalyses the reaction L-glutamate 5-semialdehyde + NAD(+) + H2O = L-glutamate + NADH + 2 H(+). The protein operates within amino-acid degradation; L-proline degradation into L-glutamate; L-glutamate from L-proline: step 2/2. In terms of biological role, irreversible conversion of delta-1-pyrroline-5-carboxylate (P5C), derived either from proline or ornithine, to glutamate. This is a necessary step in the pathway interconnecting the urea and tricarboxylic acid cycles. This Dictyostelium discoideum (Social amoeba) protein is Delta-1-pyrroline-5-carboxylate dehydrogenase, mitochondrial.